The chain runs to 519 residues: Cell adhesion molecule CEACAM1 (519 aa).

Residues 1–34 form the signal peptide; the sequence is MELASARLLRGQIPWRGLLLTASLLTYWSPLTTA. A Pyrrolidone carboxylic acid modification is found at glutamine 35. The Extracellular portion of the chain corresponds to 35–425; the sequence is QVTVDAVPPN…QGNSGLSEGA (391 aa). The tract at residues 39–142 is required for homophilic binding; that stretch reads DAVPPNVVEE…QTSVQFRVYP (104 aa). In terms of domain architecture, Ig-like V-type spans 42 to 140; that stretch reads PPNVVEEKSV…PIQTSVQFRV (99 aa). N-linked (GlcNAc...) asparagine glycans are attached at residues asparagine 87, asparagine 104, asparagine 113, asparagine 148, asparagine 152, asparagine 173, asparagine 197, asparagine 224, asparagine 256, asparagine 288, asparagine 292, asparagine 302, asparagine 315, and asparagine 331. Ig-like C2-type domains follow at residues 147–232, 237–317, and 325–403; these read PNVT…FNLD, PDAP…KNIT, and PSIQ…FRIS. A disulfide bond links cysteine 167 and cysteine 215. Cysteine 259 and cysteine 299 are joined by a disulfide. A disulfide bond links cysteine 344 and cysteine 392. N-linked (GlcNAc...) asparagine; atypical glycosylation is present at asparagine 374. The chain crosses the membrane as a helical span at residues 426-446; sequence IAGIVIGSVAGVALIAALAYF. The interval 445 to 457 is interaction with calmodulin; the sequence is YFLYSRKTGGGSD. Over 447–519 the chain is Cytoplasmic; it reads LYSRKTGGGS…ETVYSVVKKK (73 aa). An interaction with FLNA region spans residues 447-519; it reads LYSRKTGGGS…ETVYSVVKKK (73 aa). The segment at 455–519 is disordered; the sequence is GSDHRDLTEH…ETVYSVVKKK (65 aa). Basic and acidic residues predominate over residues 456 to 466; it reads SDHRDLTEHKP. The interval 484-519 is required for interaction with PTPN11 and PTPN6 and for control of phosphorylation level; that stretch reads DDVSYSVLNFNAQQSKRPTSASSSPTETVYSVVKKK. Tyrosine 488 is subject to Phosphotyrosine; by SRC, LCK, INSR and EGFR. Residues 489–512 are compositionally biased toward polar residues; that stretch reads SVLNFNAQQSKRPTSASSSPTETV. Serine 503 carries the post-translational modification Phosphoserine. A Phosphotyrosine; by INSR, SRC and LCK modification is found at tyrosine 513. The tract at residues 513-516 is essential for interaction with PTPN11 and PTPN6; that stretch reads YSVV.

It belongs to the immunoglobulin superfamily. CEA family. In terms of assembly, monomer. Oligomer. Heterodimer. Homodimer. Cis-dimer/oligomer (via Ig-like C2-type and/or via cytoplasmic domains); induced by trans-homophilic cell adhesion through an allosteric mechanism transmitted by the Ig-like V-type domain, and is regulated by intracellular calcium and calmodulin. Interacts (via cytoplasmic domain) with calmodulin in a calcium dependent manner; reduces homophilic cell adhesion through dissociation of dimer. Isoform 1 interacts (via cytoplasmic domain) with PTPN11 (preferentially) and PTPN6; cis-homodimer form is preferred; this interaction is decreased by formation of isoform 1 / isoform 2 cis-heterodimers and is dependent on the monomer/dimer equilibrium; this interaction is phosphorylation-dependent. Isoform 1 interacts with LYN. Isoform 1 interacts (via cytoplasmic domain) with SRC (via SH2 domain); this interaction is regulated by trans-homophilic cell adhesion. Isoform 1 interacts (via cytoplasmic domain) with LCK; mediates phosphorylation at Tyr-488 and Tyr-513 resulting in PTPN6 association. Isoform 1 interacts with PTPN6; this interaction is phosphorylation-dependent and causes a profound decrease in TCR stimulation-induced CD247 and ZAP70 phosphorylation. Isoform 1 interacts with TCR/CD3 complex through TCR beta chain and CD3E; colocalizes at the cell surface and upon stimulation of the TCR/CD3 complex recruits PTPN6 in the TCR/CD3 complex, resulting in dephosphorylation of CD247 and ZAP70. Isoform 1 interacts (via cytoplasmic domain) with SHC1 (via SH2 domain); SHC1 mediates interaction with INSR or EGFR in a Ser-503 phosphorylation-dependent manner. Isoform 1 interacts with EGFR; the interaction is indirect. Isoform 1 interacts with CSF3R; down-regulates the CSF3R-STAT3 pathway through recruitment of PTPN6 that dephosphorylates CSF3R. Isoform 1 (phosphorylated form) interacts with TLR4 and SYK; recruits PTPN6 that dephosphorylates SYK, reducing the production of reactive oxygen species (ROS) and lysosome disruption, leading to a reduction of the inflammasome activity. Isoform 1 interacts with FLNA; inhibits cell migration and cell scattering by interfering with the interaction of FLNA with RALA. Isoform 1 interacts (via cytoplasmic domain) with PXN; the interaction is phosphotyrosyl-dependent. Isoform 1 interacts with KLRK1; recruits PTPN6 that dephosphorylates VAV1. Isoform 1 interacts with CEACAM8. Isoform 1 interacts with FASN; this interaction is insulin and phosphorylation-dependent; reduces fatty-acid synthase activity. Interacts (via Ig-like V-type) with HAVCR2 (via Ig-like V-type); facilitates the maturation and cell surface expression of HAVCR2 thereby regulating T-cell tolerance induction. Isoform 2 interacts (via the cytoplasmic domain) with ANXA2; this interaction is regulated by phosphorylation and appears in the AIIt complex. Interacts (via Lewis X moieties) with CD209 (via C-type lectin domain); this interaction is regulated by the glycosylation pattern of CEACAM1 on cell types and regulates contact between dendritic cells and neutrophils. Post-translationally, phosphorylated on serine and tyrosine. Isoform 1 is phosphorylated on tyrosine by Src family kinases like SRC and LCK and by receptor like CSF3R, EGFR and INSR upon stimulation. Phosphorylated at Ser-503; mediates activity. Phosphorylated at Tyr-488; regulates activity. Phosphorylated at Tyr-488 by EGFR and INSR upon stimulation; this phosphorylation is Ser-503-phosphorylation-dependent; mediates cellular internalization; increases interaction with FASN. Phosphorylated at Tyr-488 and Tyr-513 by LCK; mediates PTPN6 association and is regulated by homophilic ligation of CEACAM1 in the absence of T-cell activation. Phosphorylated at Tyr-513; mediates interaction with PTPN11. Phosphorylated on serine and threonine. Expressed in epithelia, vessel endothelia, leukocytes and platelets. Isoform 1 and isoform 2 are highly expressed in liver and intestine, moderately in lung, and weakly in muscle, kidney, and spleen. Expressed in granulocytes, lymphocytes, granulocytes, B cells, and T-cells.

The protein resides in the cell membrane. It is found in the lateral cell membrane. It localises to the apical cell membrane. Its subcellular location is the basal cell membrane. The protein localises to the cell junction. The protein resides in the adherens junction. It is found in the cytoplasmic vesicle. It localises to the secretory vesicle. Its subcellular location is the cell projection. The protein localises to the microvillus membrane. Functionally, cell adhesion protein that mediates homophilic cell adhesion in a calcium-independent manner. Plays a role as coinhibitory receptor in immune response, insulin action and also functions as an activator during angiogenesis. Its coinhibitory receptor function is phosphorylation- and PTPN6 -dependent, which in turn, suppress signal transduction of associated receptors by dephosphorylation of their downstream effectors. Plays a role in immune response, of T-cells, natural killer (NK) and neutrophils. Upon TCR/CD3 complex stimulation, inhibits TCR-mediated cytotoxicity by blocking granule exocytosis by mediating homophilic binding to adjacent cells, allowing interaction with and phosphorylation by LCK and interaction with the TCR/CD3 complex which recruits PTPN6 resulting in dephosphorylation of CD247 and ZAP70. Also inhibits T-cell proliferation and cytokine production through inhibition of JNK cascade and plays a crucial role in regulating autoimmunity and anti-tumor immunity by inhibiting T-cell through its interaction with HAVCR2. Upon natural killer (NK) cells activation, inhibit KLRK1-mediated cytolysis of CEACAM1-bearing tumor cells by trans-homophilic interactions with CEACAM1 on the target cell and lead to cis-interaction between CEACAM1 and KLRK1, allowing PTPN6 recruitment and then VAV1 dephosphorylation. Upon neutrophils activation negatively regulates IL1B production by recruiting PTPN6 to a SYK-TLR4-CEACAM1 complex, that dephosphorylates SYK, reducing the production of reactive oxygen species (ROS) and lysosome disruption, which in turn, reduces the activity of the inflammasome. Down-regulates neutrophil production by acting as a coinhibitory receptor for CSF3R by downregulating the CSF3R-STAT3 pathway through recruitment of PTPN6 that dephosphorylates CSF3R. Also regulates insulin action by promoting INS clearance and regulating lipogenesis in liver through regulating insulin signaling. Upon INS stimulation, undergoes phosphorylation by INSR leading to INS clearance by increasing receptor-mediated insulin endocytosis. This inernalization promotes interaction with FASN leading to receptor-mediated insulin degradation and to reduction of FASN activity leading to negative regulation of fatty acid synthesis. INSR-mediated phosphorylation also provokes a down-regulation of cell proliferation through SHC1 interaction resulting in decrease coupling of SHC1 to the MAPK3/ERK1-MAPK1/ERK2 and phosphatidylinositol 3-kinase pathways. Functions as activator in angiogenesis by promoting blood vessel remodeling through endothelial cell differentiation and migration and in arteriogenesis by increasing the number of collateral arteries and collateral vessel calibers after ischemia. Also regulates vascular permeability through the VEGFR2 signaling pathway resulting in control of nitric oxide production. Down-regulates cell growth in response to EGF through its interaction with SHC1 that mediates interaction with EGFR resulting in decrease coupling of SHC1 to the MAPK3/ERK1-MAPK1/ERK2 pathway. Negatively regulates platelet aggregation by decreasing platelet adhesion on type I collagen through the GPVI-FcRgamma complex. Inhibits cell migration and cell scattering through interaction with FLNA; interferes with the interaction of FLNA with RALA. Mediates bile acid transport activity in a phosphorylation dependent manner. Negatively regulates osteoclastogenesis. Cell adhesion proteins that mediates homophilic cell adhesion in a calcium-independent manner. Promotes populations of T-cells regulating IgA production and secretion associated with control of the commensal microbiota and resistance to enteropathogens. The protein is Cell adhesion molecule CEACAM1 of Rattus norvegicus (Rat).